The following is a 218-amino-acid chain: Octanoyltransferase (218 aa).

One can recognise a BPL/LPL catalytic domain in the interval 30-212 (ENTADEIWLV…HFYNILGYNA (183 aa)). Substrate is bound by residues 69–76 (RGGQITYH), 141–143 (SLG), and 154–156 (GLA). The active-site Acyl-thioester intermediate is the C172.

The protein belongs to the LipB family.

It is found in the cytoplasm. It carries out the reaction octanoyl-[ACP] + L-lysyl-[protein] = N(6)-octanoyl-L-lysyl-[protein] + holo-[ACP] + H(+). The protein operates within protein modification; protein lipoylation via endogenous pathway; protein N(6)-(lipoyl)lysine from octanoyl-[acyl-carrier-protein]: step 1/2. Its function is as follows. Catalyzes the transfer of endogenously produced octanoic acid from octanoyl-acyl-carrier-protein onto the lipoyl domains of lipoate-dependent enzymes. Lipoyl-ACP can also act as a substrate although octanoyl-ACP is likely to be the physiological substrate. The polypeptide is Octanoyltransferase (Actinobacillus pleuropneumoniae serotype 5b (strain L20)).